The primary structure comprises 1045 residues: Bifunctional glutamine synthetase adenylyltransferase/adenylyl-removing enzyme (1045 aa).

The interval 1–527 is adenylyl removase; sequence MSGPLRSERK…LHSQLFYRPL (527 aa). The tract at residues 533 to 1045 is adenylyl transferase; it reads NLSADAIRLS…GVDSMEQREF (513 aa).

The protein belongs to the GlnE family. It depends on Mg(2+) as a cofactor.

The enzyme catalyses [glutamine synthetase]-O(4)-(5'-adenylyl)-L-tyrosine + phosphate = [glutamine synthetase]-L-tyrosine + ADP. The catalysed reaction is [glutamine synthetase]-L-tyrosine + ATP = [glutamine synthetase]-O(4)-(5'-adenylyl)-L-tyrosine + diphosphate. In terms of biological role, involved in the regulation of glutamine synthetase GlnA, a key enzyme in the process to assimilate ammonia. When cellular nitrogen levels are high, the C-terminal adenylyl transferase (AT) inactivates GlnA by covalent transfer of an adenylyl group from ATP to specific tyrosine residue of GlnA, thus reducing its activity. Conversely, when nitrogen levels are low, the N-terminal adenylyl removase (AR) activates GlnA by removing the adenylyl group by phosphorolysis, increasing its activity. The regulatory region of GlnE binds the signal transduction protein PII (GlnB) which indicates the nitrogen status of the cell. The polypeptide is Bifunctional glutamine synthetase adenylyltransferase/adenylyl-removing enzyme (Corynebacterium glutamicum (strain ATCC 13032 / DSM 20300 / JCM 1318 / BCRC 11384 / CCUG 27702 / LMG 3730 / NBRC 12168 / NCIMB 10025 / NRRL B-2784 / 534)).